Here is a 94-residue protein sequence, read N- to C-terminus: MRVFALTLSLLLVWLLYTLMWGKNGVMDFRAVQAEIEVQQQVNANLHLRNQEMFAEIDDLRQGLDAIEERARNELGMVKDGETFYRIIGEESRQ.

At 1 to 3 (MRV) the chain is on the cytoplasmic side. Residues 4–21 (FALTLSLLLVWLLYTLMW) traverse the membrane as a helical segment. The Periplasmic segment spans residues 22-94 (GKNGVMDFRA…YRIIGEESRQ (73 aa)). Residues 33–76 (QAEIEVQQQVNANLHLRNQEMFAEIDDLRQGLDAIEERARNELG) adopt a coiled-coil conformation.

Belongs to the FtsB family. As to quaternary structure, part of a complex composed of FtsB, FtsL and FtsQ.

Its subcellular location is the cell inner membrane. Essential cell division protein. May link together the upstream cell division proteins, which are predominantly cytoplasmic, with the downstream cell division proteins, which are predominantly periplasmic. The chain is Cell division protein FtsB from Vibrio cholerae serotype O1 (strain ATCC 39315 / El Tor Inaba N16961).